A 466-amino-acid polypeptide reads, in one-letter code: Uronate isomerase (466 aa).

Belongs to the metallo-dependent hydrolases superfamily. Uronate isomerase family.

The catalysed reaction is D-glucuronate = D-fructuronate. The enzyme catalyses aldehydo-D-galacturonate = keto-D-tagaturonate. Its pathway is carbohydrate metabolism; pentose and glucuronate interconversion. In Caldanaerobacter subterraneus subsp. tengcongensis (strain DSM 15242 / JCM 11007 / NBRC 100824 / MB4) (Thermoanaerobacter tengcongensis), this protein is Uronate isomerase.